A 940-amino-acid polypeptide reads, in one-letter code: Receptor-like protein 9b (940 aa).

A signal peptide spans Met1–Ser28. The Extracellular portion of the chain corresponds to Leu29 to Glu895. N-linked (GlcNAc...) asparagine glycosylation is found at Asn53, Asn63, Asn66, Asn101, Asn115, and Asn151. LRR repeat units lie at residues Phe108–Arg136, Leu137–Ser163, Lys165–Asn185, Leu186–Asn211, Gln213–Leu232, Lys233–Ser255, Thr257–Asn279, Asp281–Asn304, Ser306–Pro330, Lys331–Gln354, Lys355–Lys378, Tyr379–Asn402, His403–Val426, Leu427–Glu450, Lys452–Gly475, and Ser477–Ser502. N-linked (GlcNAc...) asparagine glycosylation is found at Asn270 and Asn304. Asn361, Asn389, and Asn402 each carry an N-linked (GlcNAc...) asparagine glycan. Asn434 and Asn463 each carry an N-linked (GlcNAc...) asparagine glycan. The stretch at Leu503–Asn522 is one LRR 17; degenerate repeat. LRR repeat units follow at residues Val523–Gly546, Phe547–Lys570, Pro571–Gly593, Asp595–Ile615, Lys616–Glu639, Ile641–Leu662, Arg663–Val686, Phe752–Leu776, Gln777–Asn799, Thr801–Leu824, and Tyr826–Thr849. Asn685 is a glycosylation site (N-linked (GlcNAc...) asparagine). 2 N-linked (GlcNAc...) asparagine glycosylation sites follow: Asn783 and Asn799. N-linked (GlcNAc...) asparagine glycosylation is found at Asn831, Asn836, Asn867, and Asn873. A helical membrane pass occupies residues Ile896–Leu916. Topologically, residues Cys917–Val940 are cytoplasmic.

The protein belongs to the RLP family.

The protein resides in the cell membrane. In Arabidopsis thaliana (Mouse-ear cress), this protein is Receptor-like protein 9b.